Reading from the N-terminus, the 457-residue chain is MSKRYAVVLAAGQGTRMKSKLYKVLHPVCGKPMVEHVVDQISTLNVDKVVTIVGHGAEKVQEHLAGKSEFVKQEEQLGTAHAVLQAKAELAGKDGVTLVVCGDTPLIEASTMEALLKYHHEKRAKATILTTVIEDPTGYGRIIRDDLGIVEKIVEHKDATEKEQRISEINTGTYCFDNKALFEALENVSNDNVQGEYYLPDVIKILKDSDEVVAAYRMESFEESLGVNDRIALAEASRLMQRRINENHMRNGVTLVNPENTYIDIDVKIGQDTVIEPGVMLRGETVIGDDCVVTSGSEIVNSVIGERVHVKTSSIFESKVGDDVQIGPYAHLRPESDIHDHVKIGNYVETKKAVVGEGTKLPHFIYMGDAEIGKNVNVGCGSIAVNYDGKNKAKTIIGDNVFVGCNSNLIAPVKVGDRAFIAAGSTITKDVPDDALGIARAKQDNKLGYAKHLNHGK.

The segment at 1–230 (MSKRYAVVLA…FEESLGVNDR (230 aa)) is pyrophosphorylase. Residues 9-12 (LAAG), Lys-23, Gln-73, and 78-79 (GT) contribute to the UDP-N-acetyl-alpha-D-glucosamine site. A Mg(2+)-binding site is contributed by Asp-103. Gly-140, Glu-155, Asn-170, and Asn-228 together coordinate UDP-N-acetyl-alpha-D-glucosamine. Mg(2+) is bound at residue Asn-228. The interval 231-251 (IALAEASRLMQRRINENHMRN) is linker. Residues 252–457 (GVTLVNPENT…GYAKHLNHGK (206 aa)) are N-acetyltransferase. Residues Arg-333 and Lys-351 each coordinate UDP-N-acetyl-alpha-D-glucosamine. His-363 serves as the catalytic Proton acceptor. Residues Tyr-366 and Asn-377 each contribute to the UDP-N-acetyl-alpha-D-glucosamine site. Residues 386–387 (NY), Ala-423, and Arg-440 each bind acetyl-CoA.

The protein in the N-terminal section; belongs to the N-acetylglucosamine-1-phosphate uridyltransferase family. This sequence in the C-terminal section; belongs to the transferase hexapeptide repeat family. In terms of assembly, homotrimer. Requires Mg(2+) as cofactor.

It localises to the cytoplasm. The enzyme catalyses alpha-D-glucosamine 1-phosphate + acetyl-CoA = N-acetyl-alpha-D-glucosamine 1-phosphate + CoA + H(+). It catalyses the reaction N-acetyl-alpha-D-glucosamine 1-phosphate + UTP + H(+) = UDP-N-acetyl-alpha-D-glucosamine + diphosphate. The protein operates within nucleotide-sugar biosynthesis; UDP-N-acetyl-alpha-D-glucosamine biosynthesis; N-acetyl-alpha-D-glucosamine 1-phosphate from alpha-D-glucosamine 6-phosphate (route II): step 2/2. Its pathway is nucleotide-sugar biosynthesis; UDP-N-acetyl-alpha-D-glucosamine biosynthesis; UDP-N-acetyl-alpha-D-glucosamine from N-acetyl-alpha-D-glucosamine 1-phosphate: step 1/1. It functions in the pathway bacterial outer membrane biogenesis; LPS lipid A biosynthesis. Its function is as follows. Catalyzes the last two sequential reactions in the de novo biosynthetic pathway for UDP-N-acetylglucosamine (UDP-GlcNAc). The C-terminal domain catalyzes the transfer of acetyl group from acetyl coenzyme A to glucosamine-1-phosphate (GlcN-1-P) to produce N-acetylglucosamine-1-phosphate (GlcNAc-1-P), which is converted into UDP-GlcNAc by the transfer of uridine 5-monophosphate (from uridine 5-triphosphate), a reaction catalyzed by the N-terminal domain. This chain is Bifunctional protein GlmU, found in Listeria monocytogenes serotype 4b (strain CLIP80459).